Consider the following 455-residue polypeptide: Probable pectate lyase 6 (455 aa).

The signal sequence occupies residues 1-25; sequence MVNLGSYVFVFVALSLTVVVPSVQA. 2 N-linked (GlcNAc...) asparagine glycosylation sites follow: asparagine 55 and asparagine 75. Residues aspartate 247, aspartate 271, and aspartate 275 each coordinate Ca(2+). Residue arginine 327 is part of the active site.

It belongs to the polysaccharide lyase 1 family. Ca(2+) serves as cofactor.

It carries out the reaction Eliminative cleavage of (1-&gt;4)-alpha-D-galacturonan to give oligosaccharides with 4-deoxy-alpha-D-galact-4-enuronosyl groups at their non-reducing ends.. Its pathway is glycan metabolism; pectin degradation; 2-dehydro-3-deoxy-D-gluconate from pectin: step 2/5. In Arabidopsis thaliana (Mouse-ear cress), this protein is Probable pectate lyase 6.